The chain runs to 166 residues: Peptide deformylase (166 aa).

Residues Cys-88 and His-130 each coordinate Fe cation. Residue Glu-131 is part of the active site. His-134 contributes to the Fe cation binding site.

The protein belongs to the polypeptide deformylase family. Requires Fe(2+) as cofactor.

It carries out the reaction N-terminal N-formyl-L-methionyl-[peptide] + H2O = N-terminal L-methionyl-[peptide] + formate. Removes the formyl group from the N-terminal Met of newly synthesized proteins. Requires at least a dipeptide for an efficient rate of reaction. N-terminal L-methionine is a prerequisite for activity but the enzyme has broad specificity at other positions. This Caldicellulosiruptor bescii (strain ATCC BAA-1888 / DSM 6725 / KCTC 15123 / Z-1320) (Anaerocellum thermophilum) protein is Peptide deformylase.